The following is a 358-amino-acid chain: tRNA-specific 2-thiouridylase MnmA (358 aa).

ATP contacts are provided by residues 6–13 (AMSGGVDS) and L32. The active-site Nucleophile is the C101. A disulfide bond links C101 and C193. G125 provides a ligand contact to ATP. Residues 143 to 145 (KDQ) are interaction with tRNA. Residue C193 is the Cysteine persulfide intermediate of the active site.

Belongs to the MnmA/TRMU family.

The protein localises to the cytoplasm. The catalysed reaction is S-sulfanyl-L-cysteinyl-[protein] + uridine(34) in tRNA + AH2 + ATP = 2-thiouridine(34) in tRNA + L-cysteinyl-[protein] + A + AMP + diphosphate + H(+). Catalyzes the 2-thiolation of uridine at the wobble position (U34) of tRNA, leading to the formation of s(2)U34. The protein is tRNA-specific 2-thiouridylase MnmA of Mycolicibacterium paratuberculosis (strain ATCC BAA-968 / K-10) (Mycobacterium paratuberculosis).